The following is a 400-amino-acid chain: N(alpha)-acyl-glutamine aminoacylase (400 aa).

This sequence belongs to the peptidase M20 family. Zn(2+) is required as a cofactor.

It carries out the reaction an N(2)-acyl-L-glutamine + H2O = a carboxylate + L-glutamine. It catalyses the reaction N(2)-[(2E)-3-methylhex-2-enoyl]-L-glutaminate + H2O = (2E)-3-methylhex-2-enoate + L-glutamine. The catalysed reaction is N(2)-(3-hydroxy-3-methylhexanoyl)-L-glutaminate + H2O = 3-hydroxy-3-methylhexanoate + L-glutamine. Partial loss of activity with the combination Mn(2+) and chelating agents. Activity is lost in presence of 0.5 mM dithiothreitol. Functionally, hydrolyzes odorless N-alpha-acyl-L-glutamine conjugates of short- and medium-chain fatty acids, releasing human axillary malodor compounds. The enzyme is highly specific for the glutamine residue but has a low specificity for the acyl part of the substrate. The two most common products are 3-methyl-2-hexenoic acid (3M2H) and 3-hydroxy-3-methyl-hexanoic acid (HMHA), which are produced from the odorless precursors N-alpha-3-methyl-2-hexenoyl-L-glutamine (3M2H-Gln) and N-alpha-3-hydroxy-3-methylhexanoyl-L-glutamine (HMHA-Gln). In addition, over 28 different carboxylic acids contributing to human body odor are released by this enzyme from odorless axilla secretions, including several aliphatic 3-hydroxy acids with 4-Me branches, 3,4-unsaturated, 4-Et-branched aliphatic acids, and a variety of degradation products of amino acids. This is N(alpha)-acyl-glutamine aminoacylase from Corynebacterium striatum.